The chain runs to 290 residues: MLKTIQDKARHRTRPLWAWLKLLWQRIDEDNMTTLAGNLAYVSLLSLVPLVAVVFALFAAFPMFSDVSIQLRHFIFANFLPATGDVIQRYIEQFVANSNKMTAVGACGLIVTALLLMYSIDSALNTIWRSKRARPKIYSFAVYWMILTLGPLLAGASLAISAYLLSLRWASDLNTVIDNVLRIFPLLLSWISFWLLYSIVPTIRVPNRDAIVGAFVAALLFEAGKKGFALYITMFPSYQLIYGVLAVIPILFVWVYWTWCIVLLGAEITVTLGEYRKLKQAAEQEEDDEP.

Transmembrane regions (helical) follow at residues 44–64 (LLSL…FPMF), 104–124 (VGAC…DSAL), 140–160 (FAVY…SLAI), 183–203 (IFPL…VPTI), 210–230 (AIVG…GFAL), and 244–264 (VLAV…IVLL).

Belongs to the UPF0761 family.

The protein resides in the cell inner membrane. This is UPF0761 membrane protein YihY from Escherichia coli O1:K1 / APEC.